We begin with the raw amino-acid sequence, 219 residues long: Germin-like protein subfamily 2 member 1 (219 aa).

The signal sequence occupies residues methionine 1–serine 21. Cysteines 32 and 47 form a disulfide. One can recognise a Cupin type-1 domain in the interval glutamine 61–lysine 209. N-linked (GlcNAc...) asparagine glycosylation occurs at asparagine 70. Mn(2+) contacts are provided by histidine 109, histidine 111, glutamate 116, and histidine 155.

It belongs to the germin family. Oligomer (believed to be a pentamer but probably hexamer).

The protein resides in the secreted. It localises to the extracellular space. The protein localises to the apoplast. Its function is as follows. May play a role in plant defense. Probably has no oxalate oxidase activity even if the active site is conserved. In Arabidopsis thaliana (Mouse-ear cress), this protein is Germin-like protein subfamily 2 member 1 (GLP4).